A 71-amino-acid polypeptide reads, in one-letter code: Translation initiation factor IF-1 (71 aa).

The 71-residue stretch at 1–71 folds into the S1-like domain; it reads MSKDDLIQFT…LTKGRVIHRH (71 aa).

The protein belongs to the IF-1 family. In terms of assembly, component of the 30S ribosomal translation pre-initiation complex which assembles on the 30S ribosome in the order IF-2 and IF-3, IF-1 and N-formylmethionyl-tRNA(fMet); mRNA recruitment can occur at any time during PIC assembly.

It localises to the cytoplasm. Functionally, one of the essential components for the initiation of protein synthesis. Stabilizes the binding of IF-2 and IF-3 on the 30S subunit to which N-formylmethionyl-tRNA(fMet) subsequently binds. Helps modulate mRNA selection, yielding the 30S pre-initiation complex (PIC). Upon addition of the 50S ribosomal subunit IF-1, IF-2 and IF-3 are released leaving the mature 70S translation initiation complex. The protein is Translation initiation factor IF-1 of Rickettsia canadensis (strain McKiel).